The following is a 66-amino-acid chain: UPF0337 protein pc0632 (66 aa).

This sequence belongs to the UPF0337 (CsbD) family.

The chain is UPF0337 protein pc0632 from Protochlamydia amoebophila (strain UWE25).